The sequence spans 306 residues: Protoheme IX farnesyltransferase (306 aa).

9 helical membrane passes run 28 to 48 (LGLV…AIML), 53 to 73 (FLSS…IMAG), 105 to 125 (ASIL…LFTI), 127 to 147 (IETG…YSVW), 156 to 176 (TIIG…AIEP), 182 to 202 (AWML…ALAI), 227 to 244 (LSML…FFMQ), 246 to 266 (LGTV…LLAI), and 283 to 303 (FVYS…VTLI).

The protein belongs to the UbiA prenyltransferase family. Protoheme IX farnesyltransferase subfamily. Interacts with CtaA.

Its subcellular location is the cell membrane. The catalysed reaction is heme b + (2E,6E)-farnesyl diphosphate + H2O = Fe(II)-heme o + diphosphate. Its pathway is porphyrin-containing compound metabolism; heme O biosynthesis; heme O from protoheme: step 1/1. Converts heme B (protoheme IX) to heme O by substitution of the vinyl group on carbon 2 of heme B porphyrin ring with a hydroxyethyl farnesyl side group. This Macrococcus caseolyticus (strain JCSC5402) (Macrococcoides caseolyticum) protein is Protoheme IX farnesyltransferase.